Here is a 179-residue protein sequence, read N- to C-terminus: Segregation and condensation protein B (179 aa).

Belongs to the ScpB family. In terms of assembly, homodimer. Homodimerization may be required to stabilize the binding of ScpA to the Smc head domains. Component of a cohesin-like complex composed of ScpA, ScpB and the Smc homodimer, in which ScpA and ScpB bind to the head domain of Smc. The presence of the three proteins is required for the association of the complex with DNA.

It localises to the cytoplasm. Functionally, participates in chromosomal partition during cell division. May act via the formation of a condensin-like complex containing Smc and ScpA that pull DNA away from mid-cell into both cell halves. The sequence is that of Segregation and condensation protein B from Streptococcus equi subsp. equi (strain 4047).